A 413-amino-acid chain; its full sequence is Serine/threonine transporter SstT (413 aa).

10 helical membrane-spanning segments follow: residues 18 to 38 (LSLVTQILIGLIAGIALALFA), 52 to 72 (FVSALKAVAPILVFVLVMASI), 86 to 106 (ILFLYLLGTFAAAVVAVIASM), 119 to 139 (IAVSAPGGISEVLQSLLLSVV), 145 to 165 (ALMNANFIGILAWAIGMGVAI), 196 to 216 (LGIFGLVASTLATSGFGALIG), 221 to 241 (LAVLLGCMLFVALVMNPLIVF), 292 to 312 (VSIPLGATINMAGAAITITVL), 320 to 340 (LGIAVDIPTAILLSVVAAICA), and 360 to 380 (LFGIPSEIAMQVVAVGFIIGV).

It belongs to the dicarboxylate/amino acid:cation symporter (DAACS) (TC 2.A.23) family.

The protein localises to the cell inner membrane. The enzyme catalyses L-serine(in) + Na(+)(in) = L-serine(out) + Na(+)(out). It carries out the reaction L-threonine(in) + Na(+)(in) = L-threonine(out) + Na(+)(out). In terms of biological role, involved in the import of serine and threonine into the cell, with the concomitant import of sodium (symport system). This is Serine/threonine transporter SstT from Pseudomonas fluorescens (strain Pf0-1).